We begin with the raw amino-acid sequence, 451 residues long: Jacalin-related lectin 35 (451 aa).

The residue at position 2 (Ala2) is an N-acetylalanine. Jacalin-type lectin domains are found at residues 2–143, 156–297, and 306–448; these read AKKL…YIIP, LTKL…YIIP, and SNTI…NVAP.

This sequence belongs to the jacalin lectin family. In terms of assembly, component of the PYK10 complex, at least composed of PYK10/BGLU23, BGLU21, BGLU22, JAL22, JAL23, PBP1/JAL30, PBP2/JAL31, JAL32, JAL33, JAL34, JAL35, GLL22 and GLL23.

This Arabidopsis thaliana (Mouse-ear cress) protein is Jacalin-related lectin 35 (JAL35).